The primary structure comprises 467 residues: Putative protein MSS51 homolog, mitochondrial (467 aa).

A compositionally biased stretch (basic residues) spans Met-1–Pro-13. The disordered stretch occupies residues Met-1 to Leu-34. Over residues Pro-14–Pro-23 the composition is skewed to pro residues. Residues Cys-104, Cys-107, Cys-123, Cys-126, Cys-132, Cys-136, His-144, and Cys-148 each contribute to the Zn(2+) site. The MYND-type zinc finger occupies Cys-104–Cys-148.

The sequence is that of Putative protein MSS51 homolog, mitochondrial (Mss51) from Rattus norvegicus (Rat).